A 358-amino-acid chain; its full sequence is Photosystem II protein D1 2 (358 aa).

The next 3 membrane-spanning stretches (helical) occupy residues 28–45 (YVGW…AATT), 117–132 (HFLI…QWEL), and 141–155 (WICV…AAFA). His-117 lines the chlorophyll a pocket. Position 125 (Tyr-125) interacts with pheophytin a. 2 residues coordinate [CaMn4O5] cluster: Asp-169 and Glu-188. The chain crosses the membrane as a helical span at residues 196–217 (FHMLGVAGVFGGSLFSAMHGSL). His-197 serves as a coordination point for chlorophyll a. A quinone-binding positions include His-214 and 263–264 (SF). Residue His-214 coordinates Fe cation. His-271 serves as a coordination point for Fe cation. Residues 273-287 (FLAAWPVVGIWFTSM) traverse the membrane as a helical segment. [CaMn4O5] cluster contacts are provided by His-331, Glu-332, Asp-341, and Ala-343. A propeptide spanning residues 344–358 (ATESTPVALQAPTIG) is cleaved from the precursor.

This sequence belongs to the reaction center PufL/M/PsbA/D family. PSII is composed of 1 copy each of membrane proteins PsbA, PsbB, PsbC, PsbD, PsbE, PsbF, PsbH, PsbI, PsbJ, PsbK, PsbL, PsbM, PsbT, PsbX, PsbY, PsbZ, Psb30/Ycf12, peripheral proteins PsbO, CyanoQ (PsbQ), PsbU, PsbV and a large number of cofactors. It forms dimeric complexes. The cofactor is The D1/D2 heterodimer binds P680, chlorophylls that are the primary electron donor of PSII, and subsequent electron acceptors. It shares a non-heme iron and each subunit binds pheophytin, quinone, additional chlorophylls, carotenoids and lipids. D1 provides most of the ligands for the Mn4-Ca-O5 cluster of the oxygen-evolving complex (OEC). There is also a Cl(-1) ion associated with D1 and D2, which is required for oxygen evolution. The PSII complex binds additional chlorophylls, carotenoids and specific lipids.. Tyr-160 forms a radical intermediate that is referred to as redox-active TyrZ, YZ or Y-Z. In terms of processing, C-terminally processed by CtpA; processing is essential to allow assembly of the oxygen-evolving complex and thus photosynthetic growth.

It localises to the cellular thylakoid membrane. It carries out the reaction 2 a plastoquinone + 4 hnu + 2 H2O = 2 a plastoquinol + O2. Its function is as follows. Photosystem II (PSII) is a light-driven water:plastoquinone oxidoreductase that uses light energy to abstract electrons from H(2)O, generating O(2) and a proton gradient subsequently used for ATP formation. It consists of a core antenna complex that captures photons, and an electron transfer chain that converts photonic excitation into a charge separation. The D1/D2 (PsbA/PsbD) reaction center heterodimer binds P680, the primary electron donor of PSII as well as several subsequent electron acceptors. The chain is Photosystem II protein D1 2 from Synechococcus sp. (strain WH7803).